We begin with the raw amino-acid sequence, 195 residues long: Probable septum site-determining protein MinC (195 aa).

It belongs to the MinC family. Interacts with MinD and FtsZ.

In terms of biological role, cell division inhibitor that blocks the formation of polar Z ring septums. Rapidly oscillates between the poles of the cell to destabilize FtsZ filaments that have formed before they mature into polar Z rings. Prevents FtsZ polymerization. This is Probable septum site-determining protein MinC from Helicobacter pylori (strain P12).